Consider the following 439-residue polypeptide: Ectonucleotide pyrophosphatase/phosphodiesterase family member 7 (439 aa).

A signal peptide spans 1-21 (MGHSAVLLCVALAILPACVTG). The Extracellular portion of the chain corresponds to 22 to 414 (APVQRQHKLL…ILRPMLRSGS (393 aa)). 2 residues coordinate Zn(2+): Asp36 and Thr72. Residues 69–75 (VTMTSPC) form a required for enzyme activity region. Thr72 serves as the catalytic Nucleophile. Asn93 contributes to the substrate binding site. N-linked (GlcNAc...) asparagine glycosylation is found at Asn97, Asn118, Asn143, and Asn165. Residues Asp196, His200, Asp243, and His244 each contribute to the Zn(2+) site. Asn264 is a glycosylation site (N-linked (GlcNAc...) asparagine). His350 is a binding site for Zn(2+). Residues 415–435 (ASLLSSQHHLVALLVGILTCL) form a helical membrane-spanning segment. Over 436 to 439 (AKVL) the chain is Cytoplasmic.

The cofactor is Zn(2+). Post-translationally, N-glycosylated; required for activity and transport to the plasma membrane. As to expression, expressed in liver and small intestine.

It localises to the cell membrane. The catalysed reaction is a sphingomyelin + H2O = phosphocholine + an N-acylsphing-4-enine + H(+). It catalyses the reaction a 1-O-alkyl-2-acetyl-sn-glycero-3-phosphocholine + H2O = a 1-O-alkyl-2-acetyl-sn-glycerol + phosphocholine + H(+). It carries out the reaction 1-O-octadecyl-2-acetyl-sn-glycero-3-phosphocholine + H2O = 1-O-octadecyl-2-acetyl-sn-glycerol + phosphocholine + H(+). The enzyme catalyses 1-hexadecanoyl-sn-glycero-3-phosphocholine + H2O = 1-hexadecanoyl-sn-glycerol + phosphocholine + H(+). Its function is as follows. Choline-specific phosphodiesterase that hydrolyzes sphingomyelin releasing the ceramide and phosphocholine and therefore is involved in sphingomyelin digestion, ceramide formation, and fatty acid (FA) absorption in the gastrointestinal tract. Also has phospholipase C activity and can also cleave phosphocholine from palmitoyl lyso-phosphatidylcholine and platelet-activating factor (PAF) leading to its inactivation. Does not have nucleotide pyrophosphatase activity. May promote cholesterol absorption by affecting the levels of sphingomyelin derived from either diet or endogenous sources, in the intestinal lumen. This Mus musculus (Mouse) protein is Ectonucleotide pyrophosphatase/phosphodiesterase family member 7.